A 313-amino-acid polypeptide reads, in one-letter code: Tyrosine recombinase XerC (313 aa).

The Core-binding (CB) domain maps to 1–85 (MNDQVEAFLR…AVKSFFAFLT (85 aa)). Residues 106-291 (DLPRALTPHQ…NHASSAQPVR (186 aa)) form the Tyr recombinase domain. Catalysis depends on residues R147, K171, H243, R246, and H269. Y278 (O-(3'-phospho-DNA)-tyrosine intermediate) is an active-site residue.

This sequence belongs to the 'phage' integrase family. XerC subfamily. Forms a cyclic heterotetrameric complex composed of two molecules of XerC and two molecules of XerD.

The protein localises to the cytoplasm. In terms of biological role, site-specific tyrosine recombinase, which acts by catalyzing the cutting and rejoining of the recombining DNA molecules. The XerC-XerD complex is essential to convert dimers of the bacterial chromosome into monomers to permit their segregation at cell division. It also contributes to the segregational stability of plasmids. The polypeptide is Tyrosine recombinase XerC (Roseiflexus sp. (strain RS-1)).